The primary structure comprises 244 residues: Probable transcriptional regulatory protein Dgeo_2194 (244 aa).

Residues 1–21 (MAGHSKWAQIKRKKGANDKKR) form a disordered region.

Belongs to the TACO1 family.

It localises to the cytoplasm. This is Probable transcriptional regulatory protein Dgeo_2194 from Deinococcus geothermalis (strain DSM 11300 / CIP 105573 / AG-3a).